Consider the following 803-residue polypeptide: Phenylalanine--tRNA ligase beta subunit (803 aa).

The 114-residue stretch at 40-153 folds into the tRNA-binding domain; it reads ASLDRRIVVG…SSWEIGKPFA (114 aa). Positions 400 to 476 constitute a B5 domain; that stretch reads ADLQLLALRP…RLYGYNAIES (77 aa). D454, D460, E463, and E464 together coordinate Mg(2+). An FDX-ACB domain is found at 709–801; the sequence is SRFPVVERDI…AESKLGAVIR (93 aa).

The protein belongs to the phenylalanyl-tRNA synthetase beta subunit family. Type 1 subfamily. Tetramer of two alpha and two beta subunits. Mg(2+) is required as a cofactor.

The protein localises to the cytoplasm. It carries out the reaction tRNA(Phe) + L-phenylalanine + ATP = L-phenylalanyl-tRNA(Phe) + AMP + diphosphate + H(+). The chain is Phenylalanine--tRNA ligase beta subunit from Chlorobium chlorochromatii (strain CaD3).